The primary structure comprises 502 residues: Lysine--tRNA ligase (502 aa).

Residues glutamate 398 and glutamate 405 each contribute to the Mg(2+) site.

The protein belongs to the class-II aminoacyl-tRNA synthetase family. Homodimer. Mg(2+) serves as cofactor.

It localises to the cytoplasm. The enzyme catalyses tRNA(Lys) + L-lysine + ATP = L-lysyl-tRNA(Lys) + AMP + diphosphate. The polypeptide is Lysine--tRNA ligase (Thermotoga sp. (strain RQ2)).